A 951-amino-acid chain; its full sequence is Bifunctional glutamine synthetase adenylyltransferase/adenylyl-removing enzyme (951 aa).

Positions 1–440 (MLPLPSELQI…VFDDLIGDET (440 aa)) are adenylyl removase. Positions 449–951 (HGLYKSLWQD…WLAANDANVS (503 aa)) are adenylyl transferase.

Belongs to the GlnE family. Mg(2+) is required as a cofactor.

The catalysed reaction is [glutamine synthetase]-O(4)-(5'-adenylyl)-L-tyrosine + phosphate = [glutamine synthetase]-L-tyrosine + ADP. The enzyme catalyses [glutamine synthetase]-L-tyrosine + ATP = [glutamine synthetase]-O(4)-(5'-adenylyl)-L-tyrosine + diphosphate. Involved in the regulation of glutamine synthetase GlnA, a key enzyme in the process to assimilate ammonia. When cellular nitrogen levels are high, the C-terminal adenylyl transferase (AT) inactivates GlnA by covalent transfer of an adenylyl group from ATP to specific tyrosine residue of GlnA, thus reducing its activity. Conversely, when nitrogen levels are low, the N-terminal adenylyl removase (AR) activates GlnA by removing the adenylyl group by phosphorolysis, increasing its activity. The regulatory region of GlnE binds the signal transduction protein PII (GlnB) which indicates the nitrogen status of the cell. The polypeptide is Bifunctional glutamine synthetase adenylyltransferase/adenylyl-removing enzyme (Yersinia pseudotuberculosis serotype O:1b (strain IP 31758)).